The chain runs to 1426 residues: MLLRRRNGPCPFPLLLLLLAHCICIWPASAARDRYARQNNRQRHQDIDRDRDRDRFLYRSSSAQNRQRGGANFALGLGANGVTIPTSLEDKNKNEFVKGKICIGTKSRLSVPSNKEHHYRNLRDRYTNCTYVDGNLKLTWLPNENLDLSFLDNIREVTGYILISHVDVKKVVFPKLQIIRGRTLFSLSVEEEKYALFVTYSKMYTLEIPDLRDVLNGQVGFHNNYNLCHMRTIQWSEIVSNGTDAYYNYDFTAPERECPKCHESCTHGCWGEGPKNCQKFSKLTCSPQCAGGRCYGPKPRECCHLFCAGGCTGPTQKDCIACKNFFDEAVSKEECPPMRKYNPTTYVLETNPEGKYAYGATCVKECPGHLLRDNGACVRSCPQDKMDKGGECVPCNGPCPKTCPGVTVLHAGNIDSFRNCTVIDGNIRILDQTFSGFQDVYANYTMGPRYIPLDPERREVFSTVKEITGYLNIEGTHPQFRNLSYFRNLETIHGRQLMESMFAALAIVKSSLYSLEMRNLKQISSGSVVIQHNRDLCYVSNIRWPAIQKEPEQKVWVNENLRADLCEKNGTICSDQCNEDGCWGAGTDQCLTCKNFNFNGTCIADCGYISNAYKFDNRTCKICHPECRTCNGAGADHCQECVHVRDGQHCVSECPKNKYNDRGVCRECHATCDGCTGPKDTIGIGACTTCNLAIINNDATVKRCLLKDDKCPDGYFWEYVHPQEQGSLKPLAGRAVCRKCHPLCELCTNYGYHEQVCSKCTHYKRREQCETECPADHYTDEEQRECFQRHPECNGCTGPGADDCKSCRNFKLFDANETGPYVNSTMFNCTSKCPLEMRHVNYQYTAIGPYCAASPPRSSKITANLDVNMIFIITGAVLVPTICILCVVTYICRQKQKAKKETVKMTMALSGCEDSEPLRPSNIGANLCKLRIVKDAELRKGGVLGMGAFGRVYKGVWVPEGENVKIPVAIKELLKSTGAESSEEFLREAYIMASEEHVNLLKLLAVCMSSQMMLITQLMPLGCLLDYVRNNRDKIGSKALLNWSTQIAKGMSYLEEKRLVHRDLAARNVLVQTPSLVKITDFGLAKLLSSDSNEYKAAGGKMPIKWLALECIRNRVFTSKSDVWAFGVTIWELLTFGQRPHENIPAKDIPDLIEVGLKLEQPEICSLDIYCTLLSCWHLDAAMRPTFKQLTTVFAEFARDPGRYLAIPGDKFTRLPAYTSQDEKDLIRKLAPTTDGSEAIAKPDDYLQPKAAPGPSHRTDCTDEMPKLNRYCKDPSNKNSSTGDDERDSSAREVGVGNLRLDLPVDEDDYLMPTCQPGPNNNNNMNNPNQNNMAAVGVAAGYMDLIGVPVSVDNPEYLLNAQTLGVGESPIPTQTIGIPVMGGPGTMEVKVPMPGSEPTSSDHEYYNDTQRELQPLHRNRNTETRV.

Residues M1–A30 form the signal peptide. Over A31–N868 the chain is Extracellular. N128, N241, N419, N443, N482, N569, N599, N617, N816, N823, and N828 each carry an N-linked (GlcNAc...) asparagine glycan. Residues M869–T889 form a helical membrane-spanning segment. Over Y890 to V1426 the chain is Cytoplasmic. Phosphothreonine; by PKC is present on T902. The Protein kinase domain occupies L938–A1198. ATP-binding positions include L944–V952 and K971. D1063 functions as the Proton acceptor in the catalytic mechanism. A disordered region spans residues P1232–G1297. A compositionally biased stretch (basic and acidic residues) spans H1257–S1276. Y1310 is subject to Phosphotyrosine; by autocatalysis.

It belongs to the protein kinase superfamily. Tyr protein kinase family. EGF receptor subfamily. In terms of assembly, homodimer. Binding of the ligand spitz triggers homodimerization of the receptor however, it is able to form dimers, albeit weakly, in the absence of spitz. Interacts (when phosphorylated on tyrosine residues) with Vav (via SH2 domain). Interacts (when ubiquitinated) with Graf. May interact (when phosphorylated) with EGFRAP (via SH2 domain). Post-translationally, ubiquitination by Cbl in response to high spi, promotes its interaction with Graf and thus facilitates its GPI-enriched endocytic compartment (GEEC) mediated endocytosis and its subsequent degradation. Ubiquitously expressed in embryos. In larvae, uniform expression is seen in wing disks, genital disk, anlagen of testis and ovary, and brain cortex. In eye-antenna disk, highest expression is anterior to morphogenetic furrow, levels remain high in photoreceptor precursor cells. This pattern is reversed in posterior eye disk. In adults expression is high in brain cortex and thoracic and abdominal ganglia.

The protein resides in the membrane. It catalyses the reaction L-tyrosyl-[protein] + ATP = O-phospho-L-tyrosyl-[protein] + ADP + H(+). Functionally, receptor tyrosine kinase, binding ligands of the EGF family and activating several signaling cascades to convert extracellular cues into appropriate cellular responses. Known ligands include spitz, gurken, vein and giant-lens. Transduces the signal through the ras-raf-MAPK pathway. Critical for the proliferation of imaginal tissues, and for the determination of both the antero-posterior and dorso-ventral polarities of the oocyte. In the embryo, plays a role in the establishment of ventral cell fates, maintenance of amnioserosa and ventral neuroectodermal cells, germ band retraction, cell fate specification in the central nervous system, and production and repair of the cuticle. During dorsal closure (DC) functions with the dpp- and ACK-signaling pathways to regulate expression of the myosin zip in the embryonic epidermis and amnioserosa (AS), and thus coordinate the progression of epidermal cell shape changes required for correct DC. In the embryonic epidermis, functions by negatively regulating dpp and consequently the dpp-dependent expression of the myosin zip. In the AS, negatively regulates the production/ and or secretion of a diffusible signal which, is produced by the ACK-signaling pathway, and acts in the AS and epidermal cells to promote zip expression. Also required in the AS to inhibit or delay apoptosis, and consequently slow the rate of DC. Therefore functions at multiple levels to negatively regulate morphogenesis during DC, suggesting that it acts as a general brake mechanism for adjusting the rate of dorsal closure to ensure that closure proceeds smoothly and without loss of epidermal integrity. During oogenesis, one of two tyrosine kinase chemoattractant receptors (Egfr and Pvr), that function in the border cells (BC) to detect guidance cues from the oocyte and transduce this information to the guidance pathway that regulate the collective migration of the BC cluster through the nurse cells to the oocyte. The protein is Epidermal growth factor receptor (Egfr) of Drosophila melanogaster (Fruit fly).